Consider the following 471-residue polypeptide: Alpha-1,3/1,6-mannosyltransferase alg-2 (471 aa).

Residues Asn178 and Asn279 are each glycosylated (N-linked (GlcNAc...) asparagine). The helical transmembrane segment at 446 to 466 (GMILLVVGAAVAAVAGVISAV) threads the bilayer.

Belongs to the glycosyltransferase group 1 family. Glycosyltransferase 4 subfamily.

Its subcellular location is the endoplasmic reticulum membrane. It catalyses the reaction a beta-D-Man-(1-&gt;4)-beta-D-GlcNAc-(1-&gt;4)-alpha-D-GlcNAc-diphospho-di-trans,poly-cis-dolichol + GDP-alpha-D-mannose = an alpha-D-Man-(1-&gt;3)-beta-D-Man-(1-&gt;4)-beta-D-GlcNAc-(1-&gt;4)-alpha-D-GlcNAc-diphospho-di-trans,poly-cis-dolichol + GDP + H(+). It carries out the reaction an alpha-D-Man-(1-&gt;3)-beta-D-Man-(1-&gt;4)-beta-D-GlcNAc-(1-&gt;4)-alpha-D-GlcNAc-diphospho-di-trans,poly-cis-dolichol + GDP-alpha-D-mannose = an alpha-D-Man-(1-&gt;3)-[alpha-D-Man-(1-&gt;6)]-beta-D-Man-(1-&gt;4)-beta-D-GlcNAc-(1-&gt;4)-alpha-D-GlcNAc-diphospho-di-trans,poly-cis-dolichol + GDP + H(+). The protein operates within protein modification; protein glycosylation. Functionally, mannosylates Man(2)GlcNAc(2)-dolichol diphosphate and Man(1)GlcNAc(2)-dolichol diphosphate to form Man(3)GlcNAc(2)-dolichol diphosphate. This Neurospora crassa (strain ATCC 24698 / 74-OR23-1A / CBS 708.71 / DSM 1257 / FGSC 987) protein is Alpha-1,3/1,6-mannosyltransferase alg-2 (alg-2).